The primary structure comprises 324 residues: UDP-N-acetylenolpyruvoylglucosamine reductase (324 aa).

The FAD-binding PCMH-type domain maps to 36-217 (FRAGGLAELM…IRAEMDAVRA (182 aa)). Residue Arg183 is part of the active site. Catalysis depends on Ser232, which acts as the Proton donor. Glu302 is a catalytic residue.

Belongs to the MurB family. FAD serves as cofactor.

The protein resides in the cytoplasm. It carries out the reaction UDP-N-acetyl-alpha-D-muramate + NADP(+) = UDP-N-acetyl-3-O-(1-carboxyvinyl)-alpha-D-glucosamine + NADPH + H(+). It participates in cell wall biogenesis; peptidoglycan biosynthesis. Cell wall formation. This Rhizobium rhizogenes (strain K84 / ATCC BAA-868) (Agrobacterium radiobacter) protein is UDP-N-acetylenolpyruvoylglucosamine reductase.